We begin with the raw amino-acid sequence, 345 residues long: UDP-N-acetylenolpyruvoylglucosamine reductase (345 aa).

Residues 27–197 (FDASAELAYE…TKVVFKLPKQ (171 aa)) form the FAD-binding PCMH-type domain. R174 is a catalytic residue. The active-site Proton donor is S245. Residue E341 is part of the active site.

It belongs to the MurB family. Requires FAD as cofactor.

The protein resides in the cytoplasm. It catalyses the reaction UDP-N-acetyl-alpha-D-muramate + NADP(+) = UDP-N-acetyl-3-O-(1-carboxyvinyl)-alpha-D-glucosamine + NADPH + H(+). The protein operates within cell wall biogenesis; peptidoglycan biosynthesis. Functionally, cell wall formation. The protein is UDP-N-acetylenolpyruvoylglucosamine reductase of Polynucleobacter asymbioticus (strain DSM 18221 / CIP 109841 / QLW-P1DMWA-1) (Polynucleobacter necessarius subsp. asymbioticus).